Reading from the N-terminus, the 299-residue chain is 4-diphosphocytidyl-2-C-methyl-D-erythritol kinase (299 aa).

Lysine 11 is a catalytic residue. 94–104 (PQGGGLGGGSS) provides a ligand contact to ATP. Residue aspartate 136 is part of the active site.

Belongs to the GHMP kinase family. IspE subfamily.

It carries out the reaction 4-CDP-2-C-methyl-D-erythritol + ATP = 4-CDP-2-C-methyl-D-erythritol 2-phosphate + ADP + H(+). It functions in the pathway isoprenoid biosynthesis; isopentenyl diphosphate biosynthesis via DXP pathway; isopentenyl diphosphate from 1-deoxy-D-xylulose 5-phosphate: step 3/6. Its function is as follows. Catalyzes the phosphorylation of the position 2 hydroxy group of 4-diphosphocytidyl-2C-methyl-D-erythritol. In Bordetella pertussis (strain Tohama I / ATCC BAA-589 / NCTC 13251), this protein is 4-diphosphocytidyl-2-C-methyl-D-erythritol kinase.